We begin with the raw amino-acid sequence, 182 residues long: Large ribosomal subunit protein uL6 (182 aa).

Belongs to the universal ribosomal protein uL6 family. Part of the 50S ribosomal subunit.

This protein binds to the 23S rRNA, and is important in its secondary structure. It is located near the subunit interface in the base of the L7/L12 stalk, and near the tRNA binding site of the peptidyltransferase center. This is Large ribosomal subunit protein uL6 from Caldicellulosiruptor saccharolyticus (strain ATCC 43494 / DSM 8903 / Tp8T 6331).